Consider the following 333-residue polypeptide: Autoinducer 2 import system permease protein LsrD (333 aa).

10 consecutive transmembrane segments (helical) span residues 7 to 27 (YGWE…FGLS), 45 to 65 (ICIG…GIDI), 67 to 87 (FGST…AGVP), 90 to 110 (VAIP…AGLI), 118 to 138 (LVIT…LSGL), 162 to 182 (LFGL…FWLL), 212 to 232 (TLCM…ILLV), 240 to 260 (SDLG…GGAN), 261 to 281 (IYGG…VGYL), and 288 to 308 (IGTP…LVVV).

This sequence belongs to the binding-protein-dependent transport system permease family. AraH/RbsC subfamily. In terms of assembly, the complex is composed of two ATP-binding proteins (LsrA), two transmembrane proteins (LsrC and LsrD) and a solute-binding protein (LsrB).

It is found in the cell inner membrane. Part of the ABC transporter complex LsrABCD involved in autoinducer 2 (AI-2) import. Probably responsible for the translocation of the substrate across the membrane. This chain is Autoinducer 2 import system permease protein LsrD (lsrD), found in Yersinia pseudotuberculosis serotype IB (strain PB1/+).